The following is a 50-amino-acid chain: Bacteriocin-like protein SboX (50 aa).

The chain is Bacteriocin-like protein SboX (sboX) from Bacillus subtilis (strain 168).